Here is a 187-residue protein sequence, read N- to C-terminus: Ribosome-recycling factor (187 aa).

This sequence belongs to the RRF family.

Its subcellular location is the cytoplasm. Functionally, responsible for the release of ribosomes from messenger RNA at the termination of protein biosynthesis. May increase the efficiency of translation by recycling ribosomes from one round of translation to another. The protein is Ribosome-recycling factor of Nitrobacter winogradskyi (strain ATCC 25391 / DSM 10237 / CIP 104748 / NCIMB 11846 / Nb-255).